Reading from the N-terminus, the 264-residue chain is S-adenosylmethionine decarboxylase proenzyme (264 aa).

Catalysis depends on Ser113, which acts as the Schiff-base intermediate with substrate; via pyruvic acid. Ser113 carries the post-translational modification Pyruvic acid (Ser); by autocatalysis. His118 serves as the catalytic Proton acceptor; for processing activity. Catalysis depends on Cys141, which acts as the Proton donor; for catalytic activity.

This sequence belongs to the prokaryotic AdoMetDC family. Type 2 subfamily. Heterooctamer of four alpha and four beta chains arranged as a tetramer of alpha/beta heterodimers. It depends on pyruvate as a cofactor. Is synthesized initially as an inactive proenzyme. Formation of the active enzyme involves a self-maturation process in which the active site pyruvoyl group is generated from an internal serine residue via an autocatalytic post-translational modification. Two non-identical subunits are generated from the proenzyme in this reaction, and the pyruvate is formed at the N-terminus of the alpha chain, which is derived from the carboxyl end of the proenzyme. The post-translation cleavage follows an unusual pathway, termed non-hydrolytic serinolysis, in which the side chain hydroxyl group of the serine supplies its oxygen atom to form the C-terminus of the beta chain, while the remainder of the serine residue undergoes an oxidative deamination to produce ammonia and the pyruvoyl group blocking the N-terminus of the alpha chain.

The catalysed reaction is S-adenosyl-L-methionine + H(+) = S-adenosyl 3-(methylsulfanyl)propylamine + CO2. It participates in amine and polyamine biosynthesis; S-adenosylmethioninamine biosynthesis; S-adenosylmethioninamine from S-adenosyl-L-methionine: step 1/1. Catalyzes the decarboxylation of S-adenosylmethionine to S-adenosylmethioninamine (dcAdoMet), the propylamine donor required for the synthesis of the polyamines spermine and spermidine from the diamine putrescine. The sequence is that of S-adenosylmethionine decarboxylase proenzyme from Xylella fastidiosa (strain Temecula1 / ATCC 700964).